The sequence spans 397 residues: Argininosuccinate synthase (397 aa).

8–16 (AYSGGLDTS) is a binding site for ATP. An L-citrulline-binding site is contributed by Tyr-87. Gly-117 contacts ATP. Residues Thr-119, Asn-123, and Asp-124 each contribute to the L-aspartate site. Position 123 (Asn-123) interacts with L-citrulline. The L-citrulline site is built by Arg-127, Ser-175, Glu-259, and Tyr-271.

The protein belongs to the argininosuccinate synthase family. Type 1 subfamily. Homotetramer.

Its subcellular location is the cytoplasm. The enzyme catalyses L-citrulline + L-aspartate + ATP = 2-(N(omega)-L-arginino)succinate + AMP + diphosphate + H(+). The protein operates within amino-acid biosynthesis; L-arginine biosynthesis; L-arginine from L-ornithine and carbamoyl phosphate: step 2/3. In Streptomyces clavuligerus, this protein is Argininosuccinate synthase.